A 491-amino-acid polypeptide reads, in one-letter code: UDP-N-acetylmuramate--L-alanine ligase (491 aa).

Residue 115–121 (GTHGKTT) coordinates ATP.

The protein belongs to the MurCDEF family.

The protein localises to the cytoplasm. The catalysed reaction is UDP-N-acetyl-alpha-D-muramate + L-alanine + ATP = UDP-N-acetyl-alpha-D-muramoyl-L-alanine + ADP + phosphate + H(+). It participates in cell wall biogenesis; peptidoglycan biosynthesis. Functionally, cell wall formation. This is UDP-N-acetylmuramate--L-alanine ligase from Parvibaculum lavamentivorans (strain DS-1 / DSM 13023 / NCIMB 13966).